The chain runs to 343 residues: Small ribosomal subunit biogenesis GTPase RsgA (343 aa).

The region spanning Arg-116–Phe-275 is the CP-type G domain. GTP contacts are provided by residues Asn-163–Asp-166 and Gly-217–Ser-225. Cys-299, Cys-304, His-306, and Cys-312 together coordinate Zn(2+).

Belongs to the TRAFAC class YlqF/YawG GTPase family. RsgA subfamily. As to quaternary structure, monomer. Associates with 30S ribosomal subunit, binds 16S rRNA. It depends on Zn(2+) as a cofactor.

Its subcellular location is the cytoplasm. Functionally, one of several proteins that assist in the late maturation steps of the functional core of the 30S ribosomal subunit. Helps release RbfA from mature subunits. May play a role in the assembly of ribosomal proteins into the subunit. Circularly permuted GTPase that catalyzes slow GTP hydrolysis, GTPase activity is stimulated by the 30S ribosomal subunit. This chain is Small ribosomal subunit biogenesis GTPase RsgA, found in Pseudomonas fluorescens (strain Pf0-1).